Here is a 326-residue protein sequence, read N- to C-terminus: Undecaprenyl-diphosphatase (326 aa).

Helical transmembrane passes span 11 to 31, 42 to 62, 90 to 110, 138 to 158, 165 to 185, 212 to 232, 242 to 262, 272 to 292, and 304 to 324; these read AFSL…IAVA, TGVI…LGFI, GVAF…WYFW, LGIG…KLLV, FFRS…LLAL, ALAL…GLFI, FSFL…LKGL, ILPL…AIAW, and IFVW…GMGF.

Belongs to the UppP family.

Its subcellular location is the cell inner membrane. It carries out the reaction di-trans,octa-cis-undecaprenyl diphosphate + H2O = di-trans,octa-cis-undecaprenyl phosphate + phosphate + H(+). In terms of biological role, catalyzes the dephosphorylation of undecaprenyl diphosphate (UPP). Confers resistance to bacitracin. This chain is Undecaprenyl-diphosphatase, found in Synechocystis sp. (strain ATCC 27184 / PCC 6803 / Kazusa).